Reading from the N-terminus, the 528-residue chain is uncharacterized protein (528 aa).

Basic residues-rich tracts occupy residues Met-1–Leu-16 and Gln-25–Lys-43. Residues Met-1–Asp-59 are disordered.

This sequence belongs to the NOC2 family.

The protein resides in the nucleus. The protein localises to the nucleolus. This is an uncharacterized protein from Schizosaccharomyces pombe (strain 972 / ATCC 24843) (Fission yeast).